The following is a 140-amino-acid chain: Large ribosomal subunit protein uL16 (140 aa).

Belongs to the universal ribosomal protein uL16 family. As to quaternary structure, part of the 50S ribosomal subunit.

Its function is as follows. Binds 23S rRNA and is also seen to make contacts with the A and possibly P site tRNAs. The protein is Large ribosomal subunit protein uL16 of Trichlorobacter lovleyi (strain ATCC BAA-1151 / DSM 17278 / SZ) (Geobacter lovleyi).